Here is a 147-residue protein sequence, read N- to C-terminus: MQDQLICSGCRRVVQYRRGVAGVCCPGCNTLTAVNPSAVADMSELICSGCPTLLFYNRGASNIRCPSCNRLNSTRSANQIAHLTCGQCRTTLMHPPGASTVQCATCRYVNHVRDARPQTVLVENPKTLDDKGKLVSNVVVGVTSWKR.

Putative zinc finger regions lie at residues Gln-4–Val-34, Glu-44–Thr-74, and His-82–Val-112.

Its subcellular location is the nucleus. In terms of biological role, putative zinc finger that may be involved in programmed cell death and defense response. This Oryza sativa subsp. japonica (Rice) protein is Protein LOL4 (LOL4).